Here is a 239-residue protein sequence, read N- to C-terminus: Pyridoxine 5'-phosphate synthase (239 aa).

Position 7 (Asn-7) interacts with 3-amino-2-oxopropyl phosphate. Position 9–10 (9–10) interacts with 1-deoxy-D-xylulose 5-phosphate; sequence DH. Position 18 (Arg-18) interacts with 3-amino-2-oxopropyl phosphate. Catalysis depends on His-43, which acts as the Proton acceptor. 1-deoxy-D-xylulose 5-phosphate is bound by residues Arg-45 and His-50. The active-site Proton acceptor is the Glu-70. A 1-deoxy-D-xylulose 5-phosphate-binding site is contributed by Thr-100. His-191 functions as the Proton donor in the catalytic mechanism. Residues Gly-192 and 213–214 each bind 3-amino-2-oxopropyl phosphate; that span reads GH.

It belongs to the PNP synthase family. Homooctamer; tetramer of dimers.

The protein resides in the cytoplasm. The catalysed reaction is 3-amino-2-oxopropyl phosphate + 1-deoxy-D-xylulose 5-phosphate = pyridoxine 5'-phosphate + phosphate + 2 H2O + H(+). Its pathway is cofactor biosynthesis; pyridoxine 5'-phosphate biosynthesis; pyridoxine 5'-phosphate from D-erythrose 4-phosphate: step 5/5. Catalyzes the complicated ring closure reaction between the two acyclic compounds 1-deoxy-D-xylulose-5-phosphate (DXP) and 3-amino-2-oxopropyl phosphate (1-amino-acetone-3-phosphate or AAP) to form pyridoxine 5'-phosphate (PNP) and inorganic phosphate. The protein is Pyridoxine 5'-phosphate synthase of Desulforapulum autotrophicum (strain ATCC 43914 / DSM 3382 / VKM B-1955 / HRM2) (Desulfobacterium autotrophicum).